The following is a 439-amino-acid chain: Xylose isomerase (439 aa).

Catalysis depends on residues histidine 100 and aspartate 103. Residues glutamate 231, glutamate 267, histidine 270, aspartate 295, aspartate 306, aspartate 308, and aspartate 338 each coordinate Mg(2+).

This sequence belongs to the xylose isomerase family. As to quaternary structure, homotetramer. Mg(2+) is required as a cofactor.

It localises to the cytoplasm. The enzyme catalyses alpha-D-xylose = alpha-D-xylulofuranose. The chain is Xylose isomerase from Rhodopirellula baltica (strain DSM 10527 / NCIMB 13988 / SH1).